We begin with the raw amino-acid sequence, 291 residues long: Probable cell wall amidase LytH (291 aa).

Positions 1–40 are cleaved as a signal peptide; that stretch reads MKKIEAWLSKKGLKNKRTLIVVIAFVLFIIFLFLLLNSNS. Residues 41–105 enclose the SH3b domain; that stretch reads EDSGNITITE…WIAGWHTNLD (65 aa). The tract at residues 118-140 is disordered; that stretch reads QGKTIVLDPGHGGSDQGASSNTK. The region spanning 122 to 286 is the MurNAc-LAA domain; sequence IVLDPGHGGS…LEQAIVDGLK (165 aa).

The protein belongs to the N-acetylmuramoyl-L-alanine amidase 3 family.

Its subcellular location is the secreted. Probably involved in cell-wall metabolism. This Staphylococcus aureus (strain USA300) protein is Probable cell wall amidase LytH (lytH).